Consider the following 468-residue polypeptide: MLFMHIRTRFAPSPTGFIHLGNLRSALYPWAFARHNKGDFILRIEDTDLERSTQEAVDVIIEGMTWLGLDLDEGPIYQMQRIDRYHEVVKQMLDSGLAYPCYMSEEELNLLRDQQMANKEKPHYNGLWRPEPGKMLPPIPEGVKPVIRFKNSIGGSVIWNDAVKGQIEISNDELDDLVIARSDGTPTYNFCVVIDDMDMQITHVIRGDDHVNNTPRQINIMKALGGTPPVYAHLPTVLNDSGEKMSKRNGAMSVRDYQKAGYLPDAILNYLARLGWSHGDAEVFSKEQFVAWFDLESLGRSPAQHNPEKLLWLNHQYIQNSDPDKLAEATKPFAHALGIDTESGPNFVQVVGLLKDRANTLIEIAEGAKLFYMPTPNLSDKQVRENIPETVIPALKDLVGAISSAEPTKEGYAAAFKQVLAQHQLKMPALAMPVRYALFATTQTPAIDSVLVVMGRDEAIKRLSKVIR.

Residues 12–22 (PSPTGFIHLGN) carry the 'HIGH' region motif. Positions 244–248 (KMSKR) match the 'KMSKS' region motif. Lys-247 lines the ATP pocket.

Belongs to the class-I aminoacyl-tRNA synthetase family. Glutamate--tRNA ligase type 1 subfamily. In terms of assembly, monomer.

It localises to the cytoplasm. It catalyses the reaction tRNA(Glu) + L-glutamate + ATP = L-glutamyl-tRNA(Glu) + AMP + diphosphate. Catalyzes the attachment of glutamate to tRNA(Glu) in a two-step reaction: glutamate is first activated by ATP to form Glu-AMP and then transferred to the acceptor end of tRNA(Glu). In Polynucleobacter necessarius subsp. necessarius (strain STIR1), this protein is Glutamate--tRNA ligase.